Here is a 363-residue protein sequence, read N- to C-terminus: 3-isopropylmalate dehydrogenase (363 aa).

79-92 is an NAD(+) binding site; that stretch reads GPKWEHLPPNEQPE. Residues R100, R110, R139, and D228 each contribute to the substrate site. Mg(2+)-binding residues include D228, D252, and D256. 286-298 contacts NAD(+); that stretch reads GSAPDIAGKNIAN.

The protein belongs to the isocitrate and isopropylmalate dehydrogenases family. LeuB type 1 subfamily. In terms of assembly, homodimer. Mg(2+) is required as a cofactor. It depends on Mn(2+) as a cofactor.

It localises to the cytoplasm. The enzyme catalyses (2R,3S)-3-isopropylmalate + NAD(+) = 4-methyl-2-oxopentanoate + CO2 + NADH. It functions in the pathway amino-acid biosynthesis; L-leucine biosynthesis; L-leucine from 3-methyl-2-oxobutanoate: step 3/4. Its function is as follows. Catalyzes the oxidation of 3-carboxy-2-hydroxy-4-methylpentanoate (3-isopropylmalate) to 3-carboxy-4-methyl-2-oxopentanoate. The product decarboxylates to 4-methyl-2 oxopentanoate. The protein is 3-isopropylmalate dehydrogenase of Vibrio cholerae serotype O1 (strain ATCC 39315 / El Tor Inaba N16961).